A 301-amino-acid chain; its full sequence is uncharacterized protein (301 aa).

Residues 1–21 (MKIKLILVLIVFLTIVNVNNS) form the signal peptide. Residues Asn-19, Asn-59, Asn-102, and Asn-180 are each glycosylated (N-linked (GlcNAc...) asparagine).

It localises to the secreted. This is an uncharacterized protein from Dictyostelium discoideum (Social amoeba).